Consider the following 401-residue polypeptide: S-adenosylmethionine synthase (401 aa).

Position 135–140 (135–140) interacts with ATP; that stretch reads GHGSGD.

The protein belongs to the AdoMet synthase 2 family. Mg(2+) is required as a cofactor.

It carries out the reaction L-methionine + ATP + H2O = S-adenosyl-L-methionine + phosphate + diphosphate. Its pathway is amino-acid biosynthesis; S-adenosyl-L-methionine biosynthesis; S-adenosyl-L-methionine from L-methionine: step 1/1. Catalyzes the formation of S-adenosylmethionine from methionine and ATP. This chain is S-adenosylmethionine synthase, found in Methanobrevibacter smithii (strain ATCC 35061 / DSM 861 / OCM 144 / PS).